Consider the following 264-residue polypeptide: Thymidylate synthase (264 aa).

Arginine 21 serves as a coordination point for dUMP. Residue histidine 51 coordinates (6R)-5,10-methylene-5,6,7,8-tetrahydrofolate. DUMP is bound at residue 126–127 (RR). Cysteine 146 serves as the catalytic Nucleophile. DUMP contacts are provided by residues 166–169 (RSAD), asparagine 177, and 207–209 (HLY). Aspartate 169 contributes to the (6R)-5,10-methylene-5,6,7,8-tetrahydrofolate binding site. Position 263 (serine 263) interacts with (6R)-5,10-methylene-5,6,7,8-tetrahydrofolate.

The protein belongs to the thymidylate synthase family. Bacterial-type ThyA subfamily. In terms of assembly, homodimer.

It localises to the cytoplasm. The catalysed reaction is dUMP + (6R)-5,10-methylene-5,6,7,8-tetrahydrofolate = 7,8-dihydrofolate + dTMP. It functions in the pathway pyrimidine metabolism; dTTP biosynthesis. Its function is as follows. Catalyzes the reductive methylation of 2'-deoxyuridine-5'-monophosphate (dUMP) to 2'-deoxythymidine-5'-monophosphate (dTMP) while utilizing 5,10-methylenetetrahydrofolate (mTHF) as the methyl donor and reductant in the reaction, yielding dihydrofolate (DHF) as a by-product. This enzymatic reaction provides an intracellular de novo source of dTMP, an essential precursor for DNA biosynthesis. The chain is Thymidylate synthase from Neisseria meningitidis serogroup A / serotype 4A (strain DSM 15465 / Z2491).